Consider the following 96-residue polypeptide: Co-chaperonin GroES (96 aa).

The protein belongs to the GroES chaperonin family. In terms of assembly, heptamer of 7 subunits arranged in a ring. Interacts with the chaperonin GroEL.

The protein localises to the cytoplasm. Its function is as follows. Together with the chaperonin GroEL, plays an essential role in assisting protein folding. The GroEL-GroES system forms a nano-cage that allows encapsulation of the non-native substrate proteins and provides a physical environment optimized to promote and accelerate protein folding. GroES binds to the apical surface of the GroEL ring, thereby capping the opening of the GroEL channel. This Wolbachia sp. subsp. Drosophila simulans (strain wRi) protein is Co-chaperonin GroES.